A 314-amino-acid polypeptide reads, in one-letter code: Olfactory receptor 5P67 (314 aa).

The Extracellular segment spans residues 1-28 (MAFLEDGNHTAVTEFILLGLTDDPVLRV). Residue N8 is glycosylated (N-linked (GlcNAc...) asparagine). The chain crosses the membrane as a helical span at residues 29–49 (ILFTIILCIYLVTVSGNLSTI). Residues 50–57 (LLIRVSSQ) are Cytoplasmic-facing. The helical transmembrane segment at 58–78 (LHHPMYFFLSHVGSVDIGYSS) threads the bilayer. The Extracellular portion of the chain corresponds to 79–102 (SVTPNMLVNFLVEKHTIAYLGCGI). C100 and C192 are joined by a disulfide. A helical transmembrane segment spans residues 103-123 (QLSSAAFFGTAECFLLATMAY). The Cytoplasmic portion of the chain corresponds to 124 to 136 (DRFVAICNPLLYS). Residues 137–157 (TKMSTQTCIQLVVGSYTGGIL) traverse the membrane as a helical segment. Residues 158–199 (NASFAIISFFSFLFCGPNRINHFYCDFAPLVELSCSDINVSV) are Extracellular-facing. Residues 200–220 (VITTIFSASVTIITVFVIAIS) traverse the membrane as a helical segment. Residues 221–240 (YTYILITILKMRSTEGRHKA) are Cytoplasmic-facing. A helical transmembrane segment spans residues 241-261 (FSTCTSYLTAVTLFYGTVTFI). At 262-274 (YVVPKSNYSTDQN) the chain is on the extracellular side. N268 carries an N-linked (GlcNAc...) asparagine glycan. Residues 275–295 (KVASVFYIVVIPMLNPLIYSL) traverse the membrane as a helical segment. The Cytoplasmic portion of the chain corresponds to 296–314 (RNNDIKGALKRQLGKKTFS).

The protein belongs to the G-protein coupled receptor 1 family.

Its subcellular location is the cell membrane. Its function is as follows. Potential odorant receptor. This Mus musculus (Mouse) protein is Olfactory receptor 5P67.